Consider the following 376-residue polypeptide: Phospho-N-acetylmuramoyl-pentapeptide-transferase (376 aa).

Transmembrane regions (helical) follow at residues 28-48, 76-96, 100-120, 135-155, 179-199, 211-231, 252-272, 279-299, 307-327, and 353-373; these read RTIMATITAMVLTFVLAPWFI, TMGGALILLSLLLPTVLWADL, FVLATTAVTAGYGVIGYLDDF, YKLIGQVLIGGAAVAYTFLLA, YPIELPLYVYIPFAVFVVVAT, GLAIGPVIINAGTYLILAYIV, AGELSVYCGSVIGAGIGFLWY, VFMGDVGSLALGGGLGMLAVF, IILGGIFFIETVSVITQVLSF, and KIIVRFWIISILLALVSLASM.

It belongs to the glycosyltransferase 4 family. MraY subfamily. It depends on Mg(2+) as a cofactor.

It is found in the cell inner membrane. It carries out the reaction UDP-N-acetyl-alpha-D-muramoyl-L-alanyl-gamma-D-glutamyl-meso-2,6-diaminopimeloyl-D-alanyl-D-alanine + di-trans,octa-cis-undecaprenyl phosphate = di-trans,octa-cis-undecaprenyl diphospho-N-acetyl-alpha-D-muramoyl-L-alanyl-D-glutamyl-meso-2,6-diaminopimeloyl-D-alanyl-D-alanine + UMP. It functions in the pathway cell wall biogenesis; peptidoglycan biosynthesis. Catalyzes the initial step of the lipid cycle reactions in the biosynthesis of the cell wall peptidoglycan: transfers peptidoglycan precursor phospho-MurNAc-pentapeptide from UDP-MurNAc-pentapeptide onto the lipid carrier undecaprenyl phosphate, yielding undecaprenyl-pyrophosphoryl-MurNAc-pentapeptide, known as lipid I. This is Phospho-N-acetylmuramoyl-pentapeptide-transferase from Sorangium cellulosum (strain So ce56) (Polyangium cellulosum (strain So ce56)).